The primary structure comprises 602 residues: Glutaminase liver isoform, mitochondrial (602 aa).

Residues 1 to 14 (MRSMRALQNALSRA) constitute a mitochondrion transit peptide. Disordered stretches follow at residues 1 to 29 (MRSMRALQNALSRAGSHGRRGGWGHPSRG) and 45 to 66 (AQGRGTPHSHQPQHSDHDASHS). Residue Ser219 participates in substrate binding. At Lys253 the chain carries N6-succinyllysine. A substrate-binding site is contributed by Asn268. An N6-acetyllysine mark is found at Lys279 and Lys284. Substrate contacts are provided by Glu314 and Asn321. The residue at position 329 (Lys329) is an N6-acetyllysine. Substrate contacts are provided by Tyr347, Tyr399, and Val417. ANK repeat units lie at residues 518–551 (DSRTALHVAAAEGHIEVVKFLIEACKVNPFVKDR) and 552–585 (WGNIPLDDAVQFNHLEVVKLLQDYHDSYLLSETQ).

Belongs to the glutaminase family. Homotetramer, dimer of dimers. Does not assemble into higher oligomers. Interacts with the PDZ domain of the syntrophin SNTA1. Interacts with the PDZ domain of TAX1BP3.

Its subcellular location is the mitochondrion. It carries out the reaction L-glutamine + H2O = L-glutamate + NH4(+). With respect to regulation, enzyme activity is not stimulated by phosphate. Phosphate increases kcat, but decreases substrate affinity, resulting in unchanged enzyme activity. Its function is as follows. Plays an important role in the regulation of glutamine catabolism. Promotes mitochondrial respiration and increases ATP generation in cells by catalyzing the synthesis of glutamate and alpha-ketoglutarate. Increases cellular anti-oxidant function via NADH and glutathione production. May play a role in preventing tumor proliferation. This chain is Glutaminase liver isoform, mitochondrial (Gls2), found in Mus musculus (Mouse).